A 238-amino-acid chain; its full sequence is E3 ubiquitin-protein ligase ZNRF2 (238 aa).

A disordered region spans residues 1–137 (MGAKQSGPAA…AGGGPGGPRL (137 aa)). A lipid anchor (N-myristoyl glycine) is attached at G2. Phosphoserine occurs at positions 20, 24, 75, 82, 107, 110, 141, 147, and 189. A compositionally biased stretch (low complexity) spans 35-77 (GARAARFAAPVSGAQQPSASAGAAAAAAAAASAPAAPRSRSLG). The segment at 195–236 (CAICLEELQQGDTIARLPCLCIYHKGCIDEWFEVNRSCPEHP) adopts an RING-type; atypical zinc-finger fold.

Interacts with UBE2N. Interacts with ZNRF1. Interacts (when phosphorylated) with YWHAE. Post-translationally, phosphorylated; leading to binding to YWHAE. Phosphorylated by MTOR at Ser-147 and dephosphorylated by PP6C. Ser-147 phosphorylation stimulates vesicle-to-cytosol translocation. Expressed primarily in the nervous system. Expression is more intense in the granular cell layer of hippocampus, Purkinje cell layer of the cerebellum and the granular cell layer of the olfactory bulb. Detected in sensory neurons but not expressed in sympatic or enteric neurons. Expressed in testis, adipose tissue, columnar epithelial cells of the gut.

It localises to the endosome membrane. Its subcellular location is the lysosome membrane. It is found in the presynaptic cell membrane. The protein resides in the cytoplasm. The catalysed reaction is S-ubiquitinyl-[E2 ubiquitin-conjugating enzyme]-L-cysteine + [acceptor protein]-L-lysine = [E2 ubiquitin-conjugating enzyme]-L-cysteine + N(6)-ubiquitinyl-[acceptor protein]-L-lysine.. It functions in the pathway protein modification; protein ubiquitination. Functionally, E3 ubiquitin-protein ligase that plays a role in the establishment and maintenance of neuronal transmission and plasticity. Ubiquitinates the Na(+)/K(+) ATPase alpha-1 subunit/ATP1A1 and thereby influences its endocytosis and/or degradation. Also acts as a positive regulator of mTORC1 activation by amino acids, which functions upstream of the V-ATPase and of Rag-GTPases. In turn, phosphorylation by mTOR leads to its inhibition via targeting to the cytosol allowing a self-regulating feedback mechanism. The chain is E3 ubiquitin-protein ligase ZNRF2 (Znrf2) from Mus musculus (Mouse).